A 252-amino-acid polypeptide reads, in one-letter code: tRNA (guanine-N(7)-)-methyltransferase (252 aa).

Residues E80, E105, D132, and D155 each coordinate S-adenosyl-L-methionine. D155 is a catalytic residue. Substrate is bound by residues K159, D191, and 231-234 (TKFE).

It belongs to the class I-like SAM-binding methyltransferase superfamily. TrmB family.

It carries out the reaction guanosine(46) in tRNA + S-adenosyl-L-methionine = N(7)-methylguanosine(46) in tRNA + S-adenosyl-L-homocysteine. It functions in the pathway tRNA modification; N(7)-methylguanine-tRNA biosynthesis. Functionally, catalyzes the formation of N(7)-methylguanine at position 46 (m7G46) in tRNA. In Actinobacillus succinogenes (strain ATCC 55618 / DSM 22257 / CCUG 43843 / 130Z), this protein is tRNA (guanine-N(7)-)-methyltransferase.